Here is a 723-residue protein sequence, read N- to C-terminus: Catalase-peroxidase (723 aa).

The tryptophyl-tyrosyl-methioninium (Trp-Tyr) (with M-251) cross-link spans 97–225; sequence WHAAGSYRVT…LAAVQMGLIY (129 aa). Histidine 98 functions as the Proton acceptor in the catalytic mechanism. Positions 225-251 form a cross-link, tryptophyl-tyrosyl-methioninium (Tyr-Met) (with W-97); that stretch reads YVNPEGVNGKSDPLATAAQMRETFARM. Residue histidine 266 participates in heme b binding.

This sequence belongs to the peroxidase family. Peroxidase/catalase subfamily. In terms of assembly, homodimer or homotetramer. Heme b serves as cofactor. Post-translationally, formation of the three residue Trp-Tyr-Met cross-link is important for the catalase, but not the peroxidase activity of the enzyme.

The enzyme catalyses H2O2 + AH2 = A + 2 H2O. It catalyses the reaction 2 H2O2 = O2 + 2 H2O. Its function is as follows. Bifunctional enzyme with both catalase and broad-spectrum peroxidase activity. The polypeptide is Catalase-peroxidase (Agrobacterium fabrum (strain C58 / ATCC 33970) (Agrobacterium tumefaciens (strain C58))).